The sequence spans 407 residues: Argininosuccinate synthase (407 aa).

Residues 16 to 24 (AYSGGLDTS) and Ala-44 contribute to the ATP site. L-citrulline is bound by residues Tyr-96 and Ser-101. Gly-126 contributes to the ATP binding site. 3 residues coordinate L-aspartate: Thr-128, Asn-132, and Asp-133. Asn-132 lines the L-citrulline pocket. Arg-136, Ser-185, Ser-194, Glu-270, and Tyr-282 together coordinate L-citrulline.

The protein belongs to the argininosuccinate synthase family. Type 1 subfamily. As to quaternary structure, homotetramer.

Its subcellular location is the cytoplasm. It carries out the reaction L-citrulline + L-aspartate + ATP = 2-(N(omega)-L-arginino)succinate + AMP + diphosphate + H(+). Its pathway is amino-acid biosynthesis; L-arginine biosynthesis; L-arginine from L-ornithine and carbamoyl phosphate: step 2/3. This Shewanella frigidimarina (strain NCIMB 400) protein is Argininosuccinate synthase.